We begin with the raw amino-acid sequence, 141 residues long: uncharacterized protein (141 aa).

This is an uncharacterized protein from Clostridium pasteurianum.